A 336-amino-acid polypeptide reads, in one-letter code: tRNA N6-adenosine threonylcarbamoyltransferase (336 aa).

Positions 111 and 115 each coordinate Fe cation. Residues V134–G138, D167, G180, D184, and N272 each bind substrate. D300 provides a ligand contact to Fe cation.

The protein belongs to the KAE1 / TsaD family. It depends on Fe(2+) as a cofactor.

The protein resides in the cytoplasm. The catalysed reaction is L-threonylcarbamoyladenylate + adenosine(37) in tRNA = N(6)-L-threonylcarbamoyladenosine(37) in tRNA + AMP + H(+). Required for the formation of a threonylcarbamoyl group on adenosine at position 37 (t(6)A37) in tRNAs that read codons beginning with adenine. Is involved in the transfer of the threonylcarbamoyl moiety of threonylcarbamoyl-AMP (TC-AMP) to the N6 group of A37, together with TsaE and TsaB. TsaD likely plays a direct catalytic role in this reaction. This chain is tRNA N6-adenosine threonylcarbamoyltransferase, found in Caldicellulosiruptor bescii (strain ATCC BAA-1888 / DSM 6725 / KCTC 15123 / Z-1320) (Anaerocellum thermophilum).